The sequence spans 261 residues: Putative [LysW]-aminoadipate/[LysW]-glutamate kinase (261 aa).

Residues 35–36, R62, and N162 each bind substrate; that span reads GG.

The protein belongs to the acetylglutamate kinase family. LysZ subfamily.

It is found in the cytoplasm. It catalyses the reaction [amino-group carrier protein]-C-terminal-N-(1,4-dicarboxybutan-1-yl)-L-glutamine + ATP = [amino-group carrier protein]-C-terminal-N-(1-carboxy-5-phosphooxy-5-oxopentan-1-yl)-L-glutamine + ADP. The catalysed reaction is [amino-group carrier protein]-C-terminal-gamma-(L-glutamyl)-L-glutamate + ATP = [amino-group carrier protein]-C-terminal-gamma-(5-phospho-L-glutamyl)-L-glutamate + ADP. It functions in the pathway amino-acid biosynthesis; L-lysine biosynthesis via AAA pathway; L-lysine from L-alpha-aminoadipate (Thermus route): step 2/5. Its pathway is amino-acid biosynthesis; L-arginine biosynthesis. Involved in both the arginine and lysine biosynthetic pathways. Phosphorylates the LysW-bound precursors glutamate (for arginine biosynthesis), respectively alpha-aminoadipate (for lysine biosynthesis). This is Putative [LysW]-aminoadipate/[LysW]-glutamate kinase from Pyrobaculum aerophilum (strain ATCC 51768 / DSM 7523 / JCM 9630 / CIP 104966 / NBRC 100827 / IM2).